A 441-amino-acid chain; its full sequence is Homogentisate 1,2-dioxygenase (441 aa).

H287 serves as the catalytic Proton acceptor. 2 residues coordinate Fe cation: H330 and E336. Homogentisate is bound by residues Y345 and H366. Residue H366 coordinates Fe cation.

It belongs to the homogentisate dioxygenase family. As to quaternary structure, hexamer; dimer of trimers. Requires Fe cation as cofactor.

The enzyme catalyses homogentisate + O2 = 4-maleylacetoacetate + H(+). Its pathway is amino-acid degradation; L-phenylalanine degradation; acetoacetate and fumarate from L-phenylalanine: step 4/6. Its function is as follows. Involved in the catabolism of homogentisate (2,5-dihydroxyphenylacetate or 2,5-OH-PhAc), a central intermediate in the degradation of phenylalanine and tyrosine. Catalyzes the oxidative ring cleavage of the aromatic ring of homogentisate to yield maleylacetoacetate. This Xanthomonas oryzae pv. oryzae (strain MAFF 311018) protein is Homogentisate 1,2-dioxygenase.